The chain runs to 402 residues: Serine/threonine transporter SstT (402 aa).

8 consecutive transmembrane segments (helical) span residues 17 to 37, 44 to 64, 78 to 98, 138 to 158, 179 to 199, 212 to 232, 295 to 315, and 336 to 356; these read IAIG…ITVI, FVGG…ANAL, IIVL…ISHY, ALSQ…GFAM, IVRW…FDTI, VLIL…NPII, MAGA…TLGI, and ASGI…LFGI.

The protein belongs to the dicarboxylate/amino acid:cation symporter (DAACS) (TC 2.A.23) family.

It localises to the cell membrane. The catalysed reaction is L-serine(in) + Na(+)(in) = L-serine(out) + Na(+)(out). It catalyses the reaction L-threonine(in) + Na(+)(in) = L-threonine(out) + Na(+)(out). Functionally, involved in the import of serine and threonine into the cell, with the concomitant import of sodium (symport system). The chain is Serine/threonine transporter SstT from Streptococcus thermophilus (strain CNRZ 1066).